Reading from the N-terminus, the 323-residue chain is Acetyl-coenzyme A carboxylase carboxyl transferase subunit alpha (323 aa).

The CoA carboxyltransferase C-terminal domain occupies 40-293; it reads LAEKSLQLTK…RKALAESLKT (254 aa).

This sequence belongs to the AccA family. In terms of assembly, acetyl-CoA carboxylase is a heterohexamer composed of biotin carboxyl carrier protein (AccB), biotin carboxylase (AccC) and two subunits each of ACCase subunit alpha (AccA) and ACCase subunit beta (AccD).

The protein resides in the cytoplasm. It carries out the reaction N(6)-carboxybiotinyl-L-lysyl-[protein] + acetyl-CoA = N(6)-biotinyl-L-lysyl-[protein] + malonyl-CoA. It participates in lipid metabolism; malonyl-CoA biosynthesis; malonyl-CoA from acetyl-CoA: step 1/1. Functionally, component of the acetyl coenzyme A carboxylase (ACC) complex. First, biotin carboxylase catalyzes the carboxylation of biotin on its carrier protein (BCCP) and then the CO(2) group is transferred by the carboxyltransferase to acetyl-CoA to form malonyl-CoA. The polypeptide is Acetyl-coenzyme A carboxylase carboxyl transferase subunit alpha (Polynucleobacter necessarius subsp. necessarius (strain STIR1)).